We begin with the raw amino-acid sequence, 134 residues long: Ribonuclease P protein component 2 (134 aa).

Belongs to the eukaryotic/archaeal RNase P protein component 2 family. In terms of assembly, consists of a catalytic RNA component and at least 4-5 protein subunits. Forms a subcomplex with Rnp3 which stimulates the catalytic RNA.

It is found in the cytoplasm. It catalyses the reaction Endonucleolytic cleavage of RNA, removing 5'-extranucleotides from tRNA precursor.. Functionally, part of ribonuclease P, a protein complex that generates mature tRNA molecules by cleaving their 5'-ends. The polypeptide is Ribonuclease P protein component 2 (Methanocaldococcus jannaschii (strain ATCC 43067 / DSM 2661 / JAL-1 / JCM 10045 / NBRC 100440) (Methanococcus jannaschii)).